The chain runs to 283 residues: Small ribosomal subunit protein uS2 (283 aa).

The disordered stretch occupies residues 229 to 283; the sequence is RSAGKSGEQPAEAEPMPDWERELLEGDGAKTEAKAEEPKAEAKKADEAPEAEKSN. Residues 246–283 are compositionally biased toward basic and acidic residues; it reads DWERELLEGDGAKTEAKAEEPKAEAKKADEAPEAEKSN.

This sequence belongs to the universal ribosomal protein uS2 family.

This Cutibacterium acnes (strain DSM 16379 / KPA171202) (Propionibacterium acnes) protein is Small ribosomal subunit protein uS2.